Here is a 133-residue protein sequence, read N- to C-terminus: Fatty acid-binding protein homolog 1 (133 aa).

Residue Met-1 is modified to N-acetylmethionine. Hexadecanoate contacts are provided by residues Arg-107 and 127-129 (RTY).

The protein belongs to the calycin superfamily. Fatty-acid binding protein (FABP) family.

Has been implicated in the acquisition, storage, and transport of lipids, and may be important to the organism since it is incapable of synthesizing most of its lipids de novo. The protein is Fatty acid-binding protein homolog 1 (FABP1) of Echinococcus granulosus (Hydatid tapeworm).